The following is a 186-amino-acid chain: Chromosome-anchoring protein RacA (186 aa).

The H-T-H motif DNA-binding region spans 3 to 23 (TADAANELGVSTKTVQRWVKQ). Residues 90 to 170 (ERLEERLQRF…NRREKDTAVR (81 aa)) adopt a coiled-coil conformation. The disordered stretch occupies residues 158–186 (ESMNRREKDTAVRREEKKPKSKLKSIFSF). Positions 160-175 (MNRREKDTAVRREEKK) are enriched in basic and acidic residues.

This sequence belongs to the RacA family.

The protein localises to the cytoplasm. Required for the formation of axial filaments and for anchoring the origin regions at the cell poles in sporulating cells, thus ensuring proper chromosome segregation in the prespore. Binds in a dispersed manner throughout the chromosome but preferentially to sites clustered in the origin portion of the chromosome, causing condensation of the chromosome and its remodeling into an elongated, anchored structure. This chain is Chromosome-anchoring protein RacA, found in Bacillus licheniformis (strain ATCC 14580 / DSM 13 / JCM 2505 / CCUG 7422 / NBRC 12200 / NCIMB 9375 / NCTC 10341 / NRRL NRS-1264 / Gibson 46).